The chain runs to 196 residues: ATP-dependent Clp protease proteolytic subunit (196 aa).

S101 (nucleophile) is an active-site residue. The active site involves H126.

Belongs to the peptidase S14 family. In terms of assembly, component of the chloroplastic Clp protease core complex.

The protein localises to the plastid. It localises to the chloroplast stroma. It carries out the reaction Hydrolysis of proteins to small peptides in the presence of ATP and magnesium. alpha-casein is the usual test substrate. In the absence of ATP, only oligopeptides shorter than five residues are hydrolyzed (such as succinyl-Leu-Tyr-|-NHMec, and Leu-Tyr-Leu-|-Tyr-Trp, in which cleavage of the -Tyr-|-Leu- and -Tyr-|-Trp bonds also occurs).. In terms of biological role, cleaves peptides in various proteins in a process that requires ATP hydrolysis. Has a chymotrypsin-like activity. Plays a major role in the degradation of misfolded proteins. In Lotus japonicus (Lotus corniculatus var. japonicus), this protein is ATP-dependent Clp protease proteolytic subunit.